The chain runs to 1220 residues: ATP-dependent helicase/nuclease subunit A (1220 aa).

Residues 9–473 (VIWTDDQWKS…IDLSQNFRSR (465 aa)) form the UvrD-like helicase ATP-binding domain. 30–37 (AAAGSGKT) contributes to the ATP binding site. Positions 474 to 782 (PEVLSTTNYL…RMMTIHASKG (309 aa)) constitute a UvrD-like helicase C-terminal domain.

This sequence belongs to the helicase family. AddA subfamily. In terms of assembly, heterodimer of AddA and AddB/RexB. The cofactor is Mg(2+).

It carries out the reaction Couples ATP hydrolysis with the unwinding of duplex DNA by translocating in the 3'-5' direction.. The catalysed reaction is ATP + H2O = ADP + phosphate + H(+). In terms of biological role, the heterodimer acts as both an ATP-dependent DNA helicase and an ATP-dependent, dual-direction single-stranded exonuclease. Recognizes the chi site generating a DNA molecule suitable for the initiation of homologous recombination. The AddA nuclease domain is required for chi fragment generation; this subunit has the helicase and 3' -&gt; 5' nuclease activities. In Staphylococcus carnosus (strain TM300), this protein is ATP-dependent helicase/nuclease subunit A.